The following is a 71-amino-acid chain: Putative membrane protein insertion efficiency factor (71 aa).

The protein belongs to the UPF0161 family.

The protein localises to the cell inner membrane. In terms of biological role, could be involved in insertion of integral membrane proteins into the membrane. In Nitrosospira multiformis (strain ATCC 25196 / NCIMB 11849 / C 71), this protein is Putative membrane protein insertion efficiency factor.